A 994-amino-acid polypeptide reads, in one-letter code: Transposase for transposon Tn2501 (994 aa).

Belongs to the transposase 7 family.

Functionally, required for transposition of transposon Tn2501. This chain is Transposase for transposon Tn2501 (tnpA), found in Escherichia coli.